A 305-amino-acid polypeptide reads, in one-letter code: tRNA dimethylallyltransferase (305 aa).

15–22 is a binding site for ATP; it reads GPTASGKS. A substrate-binding site is contributed by 17-22; the sequence is TASGKS. 2 interaction with substrate tRNA regions span residues 40–43 and 164–168; these read DSMQ and QRIVR.

It belongs to the IPP transferase family. Monomer. It depends on Mg(2+) as a cofactor.

It carries out the reaction adenosine(37) in tRNA + dimethylallyl diphosphate = N(6)-dimethylallyladenosine(37) in tRNA + diphosphate. Catalyzes the transfer of a dimethylallyl group onto the adenine at position 37 in tRNAs that read codons beginning with uridine, leading to the formation of N6-(dimethylallyl)adenosine (i(6)A). This chain is tRNA dimethylallyltransferase, found in Sinorhizobium medicae (strain WSM419) (Ensifer medicae).